Reading from the N-terminus, the 187-residue chain is Tetratricopeptide repeat protein 36 (187 aa).

3 TPR repeats span residues 47-80, 82-114, and 119-152; these read VKDL…LPQR, SAYN…SNGK, and CQAL…GSEF.

The protein belongs to the TTC36 family.

This chain is Tetratricopeptide repeat protein 36 (ttc36), found in Danio rerio (Zebrafish).